The chain runs to 506 residues: Cobyric acid synthase (506 aa).

Positions 251–448 constitute a GATase cobBQ-type domain; it reads DITIAIVQLP…LHGLFDSDAF (198 aa). The active-site Nucleophile is Cys332. Residue His440 is part of the active site.

This sequence belongs to the CobB/CobQ family. CobQ subfamily. Homodimer.

Its pathway is cofactor biosynthesis; adenosylcobalamin biosynthesis. Functionally, catalyzes amidations at positions B, D, E, and G on adenosylcobyrinic A,C-diamide. NH(2) groups are provided by glutamine, and one molecule of ATP is hydrogenolyzed for each amidation. The polypeptide is Cobyric acid synthase (cbiP) (Salmonella typhimurium (strain LT2 / SGSC1412 / ATCC 700720)).